The primary structure comprises 79 residues: Dermaseptin-S8 (79 aa).

A signal peptide spans 1–22 (MDILKKSLFLVLFLGLVSLSIC). Residues 23–45 (EEEKRENEDEEKQEDDEQSEMKR) constitute a propeptide that is removed on maturation. A Glutamine amide modification is found at Gln76. Positions 78-79 (AQ) are excised as a propeptide.

It belongs to the frog skin active peptide (FSAP) family. Dermaseptin subfamily. In terms of tissue distribution, expressed by the skin glands.

The protein localises to the secreted. In terms of biological role, potent antimicrobial peptide with activity against bacteria, fungi and protozoa. Probably acts by disturbing membrane functions with its amphipathic structure. The protein is Dermaseptin-S8 of Phyllomedusa sauvagei (Sauvage's leaf frog).